Consider the following 393-residue polypeptide: Pre-mRNA-splicing regulator WTAP (393 aa).

A disordered region spans residues 240-393; it reads QQQIQTSGNR…SSVNVQGSVL (154 aa). The span at 254 to 267 shows a compositional bias: basic and acidic residues; that stretch reads ESKDEGETSGKDCG. A compositionally biased stretch (polar residues) spans 272 to 286; that stretch reads GPSNGGSSHQRTHSS. Over residues 310 to 319 the composition is skewed to basic and acidic residues; sequence LPNHSEERTS. The segment covering 320–353 has biased composition (polar residues); that stretch reads RGGSSYMNQLSTGYESVDSPTGSENSLTHQSNDT. Residues 354 to 365 show a composition bias toward basic and acidic residues; that stretch reads DSNHDSQEEKPV. Positions 369–393 are enriched in polar residues; the sequence is GNRTVSSRHLQNGLDSSVNVQGSVL.

The protein belongs to the fl(2)d family. Component of the WMM complex, a N6-methyltransferase complex composed of a catalytic subcomplex, named MAC, and of an associated subcomplex, named MACOM. Component of the MACOM subcomplex.

The protein resides in the nucleus speckle. It localises to the nucleus. The protein localises to the nucleoplasm. Its function is as follows. Associated component of the WMM complex, a complex that mediates N6-methyladenosine (m6A) methylation of RNAs, a modification that plays a role in the efficiency of mRNA splicing and RNA processing. The chain is Pre-mRNA-splicing regulator WTAP from Xenopus tropicalis (Western clawed frog).